Reading from the N-terminus, the 408-residue chain is UDP-N-acetylglucosamine--dolichyl-phosphate N-acetylglucosaminephosphotransferase (408 aa).

Over 1-10 the chain is Lumenal; it reads MWAFSELPMP. The chain crosses the membrane as a helical span at residues 11–38; sequence LLINLIVSLLGFVATVTLIPAFRGHFIA. At 39–58 the chain is on the cytoplasmic side; it reads ARLCGQDLNKTSRQQIPESQ. UDP-N-acetyl-alpha-D-glucosamine-binding positions include 44 to 46 and glutamate 56; that span reads QDL. Leucine 46 is a tunicamycin A1 binding site. A helical membrane pass occupies residues 59-78; sequence GVISGAVFLIILFCFIPFPF. The Lumenal segment spans residues 79–91; it reads LNCFVKEQCKAFP. The chain crosses the membrane as a helical span at residues 92 to 118; that stretch reads HHEFVALIGALLAICCMIFLGFADDVL. Residue asparagine 119 participates in tunicamycin A1 binding. Residues 119–121 lie on the Cytoplasmic side of the membrane; that stretch reads NLR. The chain crosses the membrane as a helical span at residues 122–143; the sequence is WRHKLLLPTAASLPLLMVYFTN. Lysine 125 provides a ligand contact to dolichyl phosphate. The Lumenal portion of the chain corresponds to 144–166; the sequence is FGNTTIVVPKPFRPILGLHLDLG. Residue asparagine 146 is glycosylated (N-linked (GlcNAc...) asparagine). The helical transmembrane segment at 167–186 threads the bilayer; that stretch reads ILYYVYMGLLAVFCTNAINI. Residue 178–186 coordinates dolichyl phosphate; that stretch reads VFCTNAINI. Asparagine 185 provides a ligand contact to tunicamycin A1. Mg(2+) is bound at residue asparagine 185. At 187 to 192 the chain is on the cytoplasmic side; that stretch reads LAGING. Asparagine 191 is a binding site for UDP-N-acetyl-alpha-D-glucosamine. Residues 193-213 form a helical membrane-spanning segment; that stretch reads LEAGQSLVISASIIVFNLVEL. Residues 214–218 are Lumenal-facing; it reads EGDCR. A helical transmembrane segment spans residues 219–242; that stretch reads DDHVFSLYFMIPFFFTTLGLLYHN. Residues 243–250 are Cytoplasmic-facing; it reads WYPSRVFV. The helical transmembrane segment at 251-269 threads the bilayer; that stretch reads GDTFCYFAGMTFAVVGILG. Aspartate 252 contributes to the tunicamycin A1 binding site. Aspartate 252 lines the Mg(2+) pocket. The Lumenal portion of the chain corresponds to 270–271; it reads HF. The chain crosses the membrane as a helical span at residues 272 to 293; it reads SKTMLLFFMPQVFNFLYSLPQL. Over 294 to 375 the chain is Cytoplasmic; it reads LHIIPCPRHR…LLLKVLGPIH (82 aa). Residue 301 to 303 participates in UDP-N-acetyl-alpha-D-glucosamine binding; the sequence is RHR. Arginine 303 contributes to the tunicamycin A1 binding site. A helical transmembrane segment spans residues 376–400; that stretch reads ERNLTLLLLLLQILGSAITFSIRYQ. The Lumenal portion of the chain corresponds to 401-408; the sequence is LVRLFYDV.

This sequence belongs to the glycosyltransferase 4 family. Homodimer. Mg(2+) serves as cofactor.

The protein localises to the endoplasmic reticulum membrane. The enzyme catalyses a di-trans,poly-cis-dolichyl phosphate + UDP-N-acetyl-alpha-D-glucosamine = an N-acetyl-alpha-D-glucosaminyl-diphospho-di-trans,poly-cis-dolichol + UMP. Its pathway is protein modification; protein glycosylation. Its activity is regulated as follows. Inhibited by natural nucleoside antibiotic tunicamycin, which acts as a structural analog and competitor of UDP-GlcNAc. Activated by mannosylphosphoryldolichol and phospholipids such as phosphatidylglycerol and phosphatidylcholine. Functionally, UDP-N-acetylglucosamine--dolichyl-phosphate N-acetylglucosaminephosphotransferase that operates in the biosynthetic pathway of dolichol-linked oligosaccharides, the glycan precursors employed in protein asparagine (N)-glycosylation. The assembly of dolichol-linked oligosaccharides begins on the cytosolic side of the endoplasmic reticulum membrane and finishes in its lumen. The sequential addition of sugars to dolichol pyrophosphate produces dolichol-linked oligosaccharides containing fourteen sugars, including two GlcNAcs, nine mannoses and three glucoses. Once assembled, the oligosaccharide is transferred from the lipid to nascent proteins by oligosaccharyltransferases. Catalyzes the initial step of dolichol-linked oligosaccharide biosynthesis, transfering GlcNAc-1-P from cytosolic UDP-GlcNAc onto the carrier lipid dolichyl phosphate (P-dolichol), yielding GlcNAc-P-P-dolichol embedded in the cytoplasmic leaflet of the endoplasmic reticulum membrane. This Homo sapiens (Human) protein is UDP-N-acetylglucosamine--dolichyl-phosphate N-acetylglucosaminephosphotransferase.